An 810-amino-acid polypeptide reads, in one-letter code: Volume-regulated anion channel subunit LRRC8A (810 aa).

The residue at position 1 (Met-1) is an N-acetylmethionine. Residues 1–22 lie on the Cytoplasmic side of the membrane; it reads MIPVTELRYFADTQPAYRILKP. Residues 23 to 47 form a helical membrane-spanning segment; it reads WWDVFTDYISIVMLMIAVFGGTLQV. At 48–123 the chain is on the extracellular side; that stretch reads TQDKMICLPC…YENRLHWFAK (76 aa). Disulfide bonds link Cys-54–Cys-310, Cys-57–Cys-65, and Cys-113–Cys-295. 2 N-linked (GlcNAc...) asparagine glycosylation sites follow: Asn-66 and Asn-83. The helical transmembrane segment at 124–142 threads the bilayer; sequence YFPYLVLLHTLIFLACSNF. The Cytoplasmic portion of the chain corresponds to 143-264; the sequence is WFKFPRTSSK…EEGDIVYRLY (122 aa). Thr-200 is subject to Phosphothreonine. The residue at position 202 (Ser-202) is a Phosphoserine. Thr-215 carries the post-translational modification Phosphothreonine. Ser-217 is modified (phosphoserine). A helical membrane pass occupies residues 265–286; it reads MRQTIIKVIKFFLIICYTVYYV. The Extracellular segment spans residues 287-316; the sequence is HNIKFDVDCTVDIESLTGYRTYRCAHPLAT. Residues 317-341 form a helical membrane-spanning segment; it reads LFKILASFYISLVIFYGLICMYTLW. The Cytoplasmic segment spans residues 342-810; the sequence is WMLRRSLKKY…RLWRADKEQA (469 aa). LRR repeat units follow at residues 399 to 422, 423 to 445, 447 to 468, 469 to 492, 493 to 515, 518 to 542, 543 to 565, 567 to 589, 590 to 613, 614 to 637, 639 to 661, 662 to 684, 686 to 707, 708 to 730, 732 to 753, 754 to 776, and 778 to 801; these read ENKL…RLTK, NAQD…VFDL, ELEV…IAQL, TGLK…AFLR, ENLR…IYSL, LEEL…GLRE, LKRL…VTDV, VHLQ…SLKK, MVNL…IFSL, HNLQ…SFQH, HRLT…IGNL, TNLE…LFYC, KLRY…IGLL, QNLQ…LFQC, KLRA…VGEL, TNLT…LGEC, and LLKR…VKER. The short motif at 706-707 is the Di-leucine motif element; the sequence is LL.

Belongs to the LRRC8 family. Heterohexamer; oligomerizes with other LRRC8 proteins (LRRC8B, LRRC8C, LRRC8D and/or LRRC8E) to form a heterohexamer. Can form homohexamers in vitro, but these have lower conductance than heterohexamers. Detected in a channel complex that contains LRRC8A, LRRC8C and LRRC8E. In vivo, the subunit composition may depend primarily on expression levels, and heterooligomeric channels containing various proportions of the different LRRC8 proteins may coexist. Interact with GRB2. Interacts with NOX4; this interaction prevents the ubiquitin-mediated degradation of LRRC8A. In terms of processing, N-glycosylated.

It localises to the cell membrane. Its subcellular location is the lysosome membrane. It carries out the reaction chloride(in) = chloride(out). It catalyses the reaction iodide(out) = iodide(in). The enzyme catalyses taurine(out) = taurine(in). The catalysed reaction is L-aspartate(out) = L-aspartate(in). It carries out the reaction L-glutamate(out) = L-glutamate(in). It catalyses the reaction myo-inositol(out) = myo-inositol(in). The enzyme catalyses 2',3'-cGAMP(out) = 2',3'-cGAMP(in). With respect to regulation, inhibited by (4-[(2-butyl-6,7-dichloro-2-cyclopentyl-2,3-dihydro-1-oxo-1H-inden-5-yl)oxy]butanoic acid), which plugs the channel like a cork in a bottle by binding in the extracellular selectivity filter and sterically occluding ion conduction. Lipids may block conduction in closed heterohexameric channels. In terms of biological role, essential component of the volume-regulated anion channel (VRAC, also named VSOAC channel), an anion channel required to maintain a constant cell volume in response to extracellular or intracellular osmotic changes. The VRAC channel conducts iodide better than chloride and can also conduct organic osmolytes like taurine. Mediates efflux of amino acids, such as aspartate and glutamate, in response to osmotic stress. In complex with LRRC8C or LRRC8E, acts as a transporter of immunoreactive cyclic dinucleotide GMP-AMP (2'-3'-cGAMP), an immune messenger produced in response to DNA virus in the cytosol: mediates both import and export of 2'-3'-cGAMP, thereby promoting transfer of 2'-3'-cGAMP to bystander cells. In contrast, complexes containing LRRC8D inhibit transport of 2'-3'-cGAMP. Required for in vivo channel activity, together with at least one other family member (LRRC8B, LRRC8C, LRRC8D or LRRC8E); channel characteristics depend on the precise subunit composition. Can form functional channels by itself (in vitro). Involved in B-cell development: required for the pro-B cell to pre-B cell transition. Also required for T-cell development. Required for myoblast differentiation: VRAC activity promotes membrane hyperpolarization and regulates insulin-stimulated glucose metabolism and oxygen consumption. Also acts as a regulator of glucose-sensing in pancreatic beta cells: VRAC currents, generated in response to hypotonicity- or glucose-induced beta cell swelling, depolarize cells, thereby causing electrical excitation, leading to increase glucose sensitivity and insulin secretion. Also plays a role in lysosome homeostasis by forming functional lysosomal VRAC channels in response to low cytoplasmic ionic strength condition: lysosomal VRAC channels are necessary for the formation of large lysosome-derived vacuoles, which store and then expel excess water to maintain cytosolic water homeostasis. Acts as a key factor in NLRP3 inflammasome activation by modulating itaconate efflux and mitochondria function. This Rattus norvegicus (Rat) protein is Volume-regulated anion channel subunit LRRC8A.